A 455-amino-acid polypeptide reads, in one-letter code: SVGFKAGVKDYKLTYYTPDYETKDTDILAAFRVTPQPGVPPEEAGAEVAAESSTGTWTTVWTDGLTSLDRYKGRCYHIEPVAGEENQYIAYVAYPLDLFEEGSVTNMFTSIVGNVFGFKALRALRLEDLRIPTAYTKTFQGPPHGIQVERDKLNKYGRPLLGCTIKPKLGLSAKNYGRAVYECLRGGLDFTKDDENVNSQPFMRWRDRFLFCAEAIYKAQAETGEIKGHYLNATAGTCEEMIKRAVFARELGVPIIMHDYLTGGFTANTSLAHYCRDNGLLLHIHRAMHAVIDRQKNHGMHFRVLAKALRLSGGDHIHAGTVVGKLEGEREITLGFVDLLRDDFIEKDRSRGIYFTQDWVSLPGVLPVASGGIHVWHMPALTEIFGDDSVLQFGGGTLGHPWGNAPGAVANRVALEACVQARNEGRDLAREGNEIIREASKWSPEFAAACEVWKE.

Residue Lys-5 is modified to N6,N6,N6-trimethyllysine. The substrate site is built by Asn-114 and Thr-164. Catalysis depends on Lys-166, which acts as the Proton acceptor. Lys-168 is a substrate binding site. Lys-192, Asp-194, and Glu-195 together coordinate Mg(2+). Lys-192 is subject to N6-carboxylysine. His-285 functions as the Proton acceptor in the catalytic mechanism. Positions 286, 318, and 370 each coordinate substrate.

It belongs to the RuBisCO large chain family. Type I subfamily. In terms of assembly, heterohexadecamer of 8 large chains and 8 small chains; disulfide-linked. The disulfide link is formed within the large subunit homodimers. Mg(2+) serves as cofactor. The disulfide bond which can form in the large chain dimeric partners within the hexadecamer appears to be associated with oxidative stress and protein turnover.

It is found in the plastid. The protein resides in the chloroplast. It catalyses the reaction 2 (2R)-3-phosphoglycerate + 2 H(+) = D-ribulose 1,5-bisphosphate + CO2 + H2O. The enzyme catalyses D-ribulose 1,5-bisphosphate + O2 = 2-phosphoglycolate + (2R)-3-phosphoglycerate + 2 H(+). Its function is as follows. RuBisCO catalyzes two reactions: the carboxylation of D-ribulose 1,5-bisphosphate, the primary event in carbon dioxide fixation, as well as the oxidative fragmentation of the pentose substrate in the photorespiration process. Both reactions occur simultaneously and in competition at the same active site. The protein is Ribulose bisphosphate carboxylase large chain of Brownea coccinea (Rose of Venezuela).